Reading from the N-terminus, the 252-residue chain is Adenosylcobinamide-GDP ribazoletransferase (252 aa).

The next 6 helical transmembrane spans lie at 29–49 (LYWFPFVGLLLGALLAALGYV), 50–70 (GSLSGWHEFAALLVVLGGIVL), 104–124 (VGSFGALALSGVMLLKWVAVV), 129–149 (FGLFDVVMAGILLARLVQVLL), 166–186 (FVAGAGAPHAFSALLFTLALL), and 194–214 (FPTMLWLLGAALVAGSMVGMV).

It belongs to the CobS family. The cofactor is Mg(2+).

The protein localises to the cell inner membrane. It carries out the reaction alpha-ribazole + adenosylcob(III)inamide-GDP = adenosylcob(III)alamin + GMP + H(+). The catalysed reaction is alpha-ribazole 5'-phosphate + adenosylcob(III)inamide-GDP = adenosylcob(III)alamin 5'-phosphate + GMP + H(+). It functions in the pathway cofactor biosynthesis; adenosylcobalamin biosynthesis; adenosylcobalamin from cob(II)yrinate a,c-diamide: step 7/7. In terms of biological role, joins adenosylcobinamide-GDP and alpha-ribazole to generate adenosylcobalamin (Ado-cobalamin). Also synthesizes adenosylcobalamin 5'-phosphate from adenosylcobinamide-GDP and alpha-ribazole 5'-phosphate. This Chlorobium chlorochromatii (strain CaD3) protein is Adenosylcobinamide-GDP ribazoletransferase.